Reading from the N-terminus, the 991-residue chain is Nonsense-mediated mRNA decay factor SMG8 (991 aa).

Disordered regions lie at residues 18–41 (LGSE…PEPP), 100–129 (GEAG…NRAE), and 278–299 (EPPR…PKRR). S115 carries the phosphoserine modification. Basic and acidic residues predominate over residues 278–289 (EPPRSQDTAHPD). Residues 290 to 299 (KPKKHSPKRR) are compositionally biased toward basic residues. A phosphoserine mark is found at S469 and S668. Positions 653-738 (FEPSTPDPAP…KSEKRPNLVD (86 aa)) are disordered. The span at 675 to 684 (DAEKLKEKEP) shows a compositional bias: basic and acidic residues. Over residues 685–706 (QTQGESTSLSLALSLGQSTDSL) the composition is skewed to polar residues. Residues 720–736 (PEVHGQGEGKSEKRPNL) are compositionally biased toward basic and acidic residues. Residues S742 and S895 each carry the phosphoserine modification. Residue R898 is modified to Omega-N-methylarginine.

This sequence belongs to the SMG8 family. In terms of assembly, component of the SMG1C complex composed of SMG1, SMG8 and SMG9; the recruitment of SMG8 to SMG1 N-terminus induces a large conformational change in the SMG1 C-terminal head domain containing the catalytic domain. Forms heterodimers with SMG9; this assembly form may represent a SMG1C intermediate form. Post-translationally, phosphorylated by SMG1.

Its function is as follows. Involved in nonsense-mediated decay (NMD) of mRNAs containing premature stop codons. Is recruited by release factors to stalled ribosomes together with SMG1 and SMG9 (forming the SMG1C protein kinase complex) and, in the SMG1C complex, is required to mediate the recruitment of SMG1 to the ribosome:SURF complex and to suppress SMG1 kinase activity until the ribosome:SURF complex locates the exon junction complex (EJC). Acts as a regulator of kinase activity. The polypeptide is Nonsense-mediated mRNA decay factor SMG8 (Smg8) (Mus musculus (Mouse)).